We begin with the raw amino-acid sequence, 511 residues long: Histidine ammonia-lyase (511 aa).

Positions 142 to 144 form a cross-link, 5-imidazolinone (Ala-Gly); it reads ASG. A 2,3-didehydroalanine (Ser) modification is found at Ser143.

It belongs to the PAL/histidase family. Post-translationally, contains an active site 4-methylidene-imidazol-5-one (MIO), which is formed autocatalytically by cyclization and dehydration of residues Ala-Ser-Gly.

The protein resides in the cytoplasm. The catalysed reaction is L-histidine = trans-urocanate + NH4(+). Its pathway is amino-acid degradation; L-histidine degradation into L-glutamate; N-formimidoyl-L-glutamate from L-histidine: step 1/3. The sequence is that of Histidine ammonia-lyase (hutH) from Rhizobium meliloti (strain 1021) (Ensifer meliloti).